The sequence spans 77 residues: MKLIIFTGLVLFAIVSLIEAQAENEKACLPQYQVCTDAPGNCCSNLVCDCYGRYKSGTRIGRNCFCLQKGVIYKREN.

Positions M1 to A20 are cleaved as a signal peptide. A propeptide spanning residues Q21–K26 is cleaved from the precursor.

This sequence belongs to the neurotoxin 19 (CSTX) family. 08 (U8-Lctx) subfamily. Post-translationally, contains 4 disulfide bonds. In terms of tissue distribution, expressed by the venom gland.

Its subcellular location is the secreted. This is U8-lycotoxin-Ls1t from Lycosa singoriensis (Wolf spider).